Reading from the N-terminus, the 371-residue chain is Aspartate-semialdehyde dehydrogenase (371 aa).

Residues 11 to 14 (RGMV), 38 to 39 (TS), and Gln-75 contribute to the NADP(+) site. A phosphate-binding site is contributed by Arg-104. Cys-137 acts as the Acyl-thioester intermediate in catalysis. Position 164 (Gln-164) interacts with substrate. 167–168 (SG) serves as a coordination point for NADP(+). A substrate-binding site is contributed by Glu-243. Lys-246 lines the phosphate pocket. Residue Arg-269 coordinates substrate. His-276 serves as the catalytic Proton acceptor. An NADP(+)-binding site is contributed by Gln-352.

It belongs to the aspartate-semialdehyde dehydrogenase family. In terms of assembly, homodimer.

The enzyme catalyses L-aspartate 4-semialdehyde + phosphate + NADP(+) = 4-phospho-L-aspartate + NADPH + H(+). It participates in amino-acid biosynthesis; L-lysine biosynthesis via DAP pathway; (S)-tetrahydrodipicolinate from L-aspartate: step 2/4. The protein operates within amino-acid biosynthesis; L-methionine biosynthesis via de novo pathway; L-homoserine from L-aspartate: step 2/3. It functions in the pathway amino-acid biosynthesis; L-threonine biosynthesis; L-threonine from L-aspartate: step 2/5. Catalyzes the NADPH-dependent formation of L-aspartate-semialdehyde (L-ASA) by the reductive dephosphorylation of L-aspartyl-4-phosphate. This is Aspartate-semialdehyde dehydrogenase from Buchnera aphidicola subsp. Schizaphis graminum (strain Sg).